Reading from the N-terminus, the 289-residue chain is tRNA (adenine(58)-N(1))-methyltransferase catalytic subunit TRMT61A (289 aa).

S2 bears the N-acetylserine mark. Residues 20–22 (LGH), 35–42 (QTQTRHGV), 64–65 (GW), 85–89 (QILYS), and 110–117 (SGTGSGSV) contribute to the substrate site. Residues L87, 114-116 (SGS), E135, R140, 163-164 (DV), and D181 contribute to the S-adenosyl-L-methionine site. Substrate contacts are provided by residues 180-183 (LDIP) and 205-212 (SFSPCIEQ). Residues 245–272 (LPPPDLGTGTDGPAGSDTSPFRSGTPMK) form a disordered region. A compositionally biased stretch (low complexity) spans 250 to 259 (LGTGTDGPAG). A Phosphoserine modification is found at S263. T278 serves as a coordination point for substrate.

This sequence belongs to the class I-like SAM-binding methyltransferase superfamily. TRM61 family. As to quaternary structure, heterotetramer; composed of two copies of TRMT6 and two copies of TRMT61A.

It localises to the nucleus. The catalysed reaction is adenosine(58) in tRNA + S-adenosyl-L-methionine = N(1)-methyladenosine(58) in tRNA + S-adenosyl-L-homocysteine + H(+). The enzyme catalyses an adenosine in mRNA + S-adenosyl-L-methionine = an N(1)-methyladenosine in mRNA + S-adenosyl-L-homocysteine + H(+). Catalytic subunit of tRNA (adenine-N(1)-)-methyltransferase, which catalyzes the formation of N(1)-methyladenine at position 58 (m1A58) in initiator methionyl-tRNA. Catalytic subunit of mRNA N(1)-methyltransferase complex, which mediates methylation of adenosine residues at the N(1) position of a small subset of mRNAs: N(1) methylation takes place in tRNA T-loop-like structures of mRNAs and is only present at low stoichiometries. The sequence is that of tRNA (adenine(58)-N(1))-methyltransferase catalytic subunit TRMT61A (TRMT61A) from Homo sapiens (Human).